Reading from the N-terminus, the 983-residue chain is Importin beta-like protein kap113 (983 aa).

One can recognise an Importin N-terminal domain in the interval 24-96; the sequence is AEGHLNNWKK…RCNALLGSIK (73 aa).

Belongs to the importin beta family.

It is found in the nucleus. Functions as a component of the nuclear pore complex (NPC). NPC components, collectively referred to as nucleoporins (NUPs), can play the role of both NPC structural components and of docking or interaction partners for transiently associated nuclear transport factors. Active directional transport is assured by both, a Phe-Gly (FG) repeat affinity gradient for these transport factors across the NPC and a transport cofactor concentration gradient across the nuclear envelope. Involved in the export of mRNA from the nucleus to the cytoplasm. May play a role in mitotic spindle formation and/or function. This is Importin beta-like protein kap113 (kap113) from Schizosaccharomyces pombe (strain 972 / ATCC 24843) (Fission yeast).